The following is a 1690-amino-acid chain: Collagen alpha-4(IV) chain (1690 aa).

Residues 1–38 form the signal peptide; the sequence is MWSLHIVLMRCSFRLTKSLATGPWSLILILFSVQYVYG. The tract at residues 39-64 is 7S domain; sequence SGKKYIGPCGGRDCSVCHCVPEKGSR. Disordered stretches follow at residues 61–173 and 187–258; these read KGSR…GEKG and GDRG…GPTL. Residues 65 to 1459 are triple-helical region; that stretch reads GPPGPPGPQG…IGDPGPKGFG (1395 aa). Pro residues predominate over residues 66–75; sequence PPGPPGPQGP. The span at 76–88 shows a compositional bias: low complexity; that stretch reads IGPLGAPGPIGLS. The short motif at 94–96 is the Cell attachment site element; the sequence is RGD. Asn142 carries an N-linked (GlcNAc...) asparagine glycan. Positions 145–147 match the Cell attachment site motif; the sequence is RGD. Residues 149–164 are compositionally biased toward gly residues; it reads GFPGGRGALGPGGPLG. The short motif at 189 to 191 is the Cell attachment site element; sequence RGD. Over residues 199 to 208 the composition is skewed to gly residues; it reads GSWGAGGPAG. Positions 310–312 match the Cell attachment site motif; the sequence is RGD. Disordered stretches follow at residues 369-390, 405-451, and 469-1457; these read PGDP…PGPP, GPPG…GLQG, and GIKG…GPKG. Low complexity predominate over residues 412 to 434; sequence FPGLPGLPGEAGIPGRPDSAPGK. Pro residues-rich tracts occupy residues 498–507 and 529–540; these read PMGPPGPPGL and PGPPGAEGPPGL. Residues 586 to 607 show a composition bias toward basic and acidic residues; sequence HGRDGHAGEKGDPGPPGDHEDA. Over residues 644–655 the composition is skewed to low complexity; the sequence is PGVPGHPGVRGP. Asn669 carries N-linked (GlcNAc...) asparagine glycosylation. Pro residues predominate over residues 681–690; sequence FDGPPGPKGF. 2 consecutive short sequence motifs (cell attachment site) follow at residues 724–726 and 785–787; these read RGD. A compositionally biased stretch (gly residues) spans 849 to 858; it reads GAPGGKGQPG. Low complexity-rich tracts occupy residues 866 to 880 and 907 to 917; these read AGMK…RPGA and PRGLPGFPGFP. The Cell attachment site motif lies at 989 to 991; it reads RGD. Positions 1023-1032 are enriched in pro residues; it reads PGPPGPPGPP. Over residues 1108 to 1117 the composition is skewed to low complexity; it reads PGIQGPRGSP. Positions 1119–1131 are enriched in pro residues; that stretch reads RPGPPGSSGPPGC. The Cell attachment site signature appears at 1212–1214; sequence RGD. 5 stretches are compositionally biased toward pro residues: residues 1220–1243, 1256–1280, 1297–1309, 1338–1353, and 1443–1452; these read ISPP…PPGP, DPGP…PPGL, PGPP…PGPP, FPGP…PPGR, and GPGPPGPIGD. The Collagen IV NC1 domain maps to 1465–1690; the sequence is GFLLVLHSQT…SRCQVCVKYS (226 aa). Intrachain disulfides connect Cys1480/Cys1569, Cys1513/Cys1566, Cys1525/Cys1531, Cys1588/Cys1686, Cys1622/Cys1683, and Cys1634/Cys1641.

This sequence belongs to the type IV collagen family. There are six type IV collagen isoforms, alpha 1(IV)-alpha 6(IV), each of which can form a triple helix structure with 2 other chains to generate type IV collagen network. The alpha 3(IV) chain forms a triple helical protomer with alpha 4(IV) and alpha 5(IV); this triple helical structure dimerizes through NC1-NC1 domain interactions such that the alpha 3(IV), alpha 4(IV) and alpha 5(IV) chains of one protomer connect with the alpha 5(IV), alpha 4(IV) and alpha 3(IV) chains of the opposite protomer, respectively. Associates with LAMB2 at the neuromuscular junction and in GBM. Prolines at the third position of the tripeptide repeating unit (G-X-Y) are hydroxylated in some or all of the chains. Post-translationally, type IV collagens contain numerous cysteine residues which are involved in inter- and intramolecular disulfide bonding. 12 of these, located in the NC1 domain, are conserved in all known type IV collagens. In terms of processing, the trimeric structure of the NC1 domains is stabilized by covalent bonds between Lys and Met residues. In terms of tissue distribution, expressed in Bruch's membrane, outer plexiform layer, inner nuclear layer, inner plexiform layer, ganglion cell layer, inner limiting membrane and around the blood vessels of the retina (at protein level). Alpha 3 and alpha 4 type IV collagens are colocalized and present in kidney, eye, basement membranes of lens capsule, cochlea, lung, skeletal muscle, aorta, synaptic fibers, fetal kidney and fetal lung. PubMed:8083201 reports similar levels of expression of alpha 3 and alpha 4 type IV collagens in kidney, but PubMed:7523402 reports that in kidney levels of alpha 3 type IV collagen are significantly lower than those of alpha 4 type IV collagen. Highest levels of expression of alpha 4 type IV collagen are detected in kidney, calvaria, neuroretina and cardiac muscle. Lower levels of expression are observed in brain, lung and thymus, and no expression is detected in choroid plexus, liver, adrenal, pancreas, ileum or skin.

Its subcellular location is the secreted. The protein resides in the extracellular space. It is found in the extracellular matrix. It localises to the basement membrane. Functionally, type IV collagen is the major structural component of glomerular basement membranes (GBM), forming a 'chicken-wire' meshwork together with laminins, proteoglycans and entactin/nidogen. The protein is Collagen alpha-4(IV) chain (COL4A4) of Homo sapiens (Human).